We begin with the raw amino-acid sequence, 930 residues long: Wings apart-like protein 1 (930 aa).

The disordered stretch occupies residues Phe-540–Ser-566. Over residues Ser-541–Ser-553 the composition is skewed to low complexity. Over residues Gly-554–Ser-566 the composition is skewed to polar residues. In terms of domain architecture, WAPL spans Lys-854–Leu-909.

It belongs to the WAPL family. As to quaternary structure, interacts with the cohesin complex throughout the cell cycle. In terms of tissue distribution, expressed in roots, leaves, buds and siliques.

Its subcellular location is the nucleus. The protein resides in the chromosome. Its function is as follows. Regulator of sister chromatid cohesion in meiosis which negatively regulates cohesin association with chromatin, acting as an antagonist of CTF7. Cohesion ensures that chromosome partitioning is accurate in both meiotic and mitotic cells and plays an important role in DNA repair. Essential for the prophase removal of cohesin during meiosis thus determining the timely release of meiotic cohesion. Important for proper spindle attachment and assembly during meiosis. Helps to prevent abnormal centromere association during prophase I in meiocytes. Required for early embryonic patterning. Also involved in chromosome segregation during mitosis. The sequence is that of Wings apart-like protein 1 from Arabidopsis thaliana (Mouse-ear cress).